Here is a 427-residue protein sequence, read N- to C-terminus: Glutamate-1-semialdehyde 2,1-aminomutase (427 aa).

Lys-265 carries the N6-(pyridoxal phosphate)lysine modification.

It belongs to the class-III pyridoxal-phosphate-dependent aminotransferase family. HemL subfamily. In terms of assembly, homodimer. Pyridoxal 5'-phosphate serves as cofactor.

Its subcellular location is the cytoplasm. It carries out the reaction (S)-4-amino-5-oxopentanoate = 5-aminolevulinate. It participates in porphyrin-containing compound metabolism; protoporphyrin-IX biosynthesis; 5-aminolevulinate from L-glutamyl-tRNA(Glu): step 2/2. The protein is Glutamate-1-semialdehyde 2,1-aminomutase of Burkholderia vietnamiensis (strain G4 / LMG 22486) (Burkholderia cepacia (strain R1808)).